We begin with the raw amino-acid sequence, 282 residues long: Deoxyribonuclease-1 (282 aa).

The signal sequence occupies residues 1–20 (MARLVLELLAAALLLRVAAT). An N-linked (GlcNAc...) asparagine glycan is attached at N38. E98 is a catalytic residue. The cysteines at positions 121 and 124 are disulfide-linked. Residue H154 is part of the active site. C193 and C229 are disulfide-bonded.

It belongs to the DNase I family. Requires Ca(2+) as cofactor. Mg(2+) is required as a cofactor. Post-translationally, N-glycosylated.

The protein resides in the secreted. It is found in the zymogen granule. The protein localises to the nucleus envelope. It carries out the reaction Endonucleolytic cleavage to 5'-phosphodinucleotide and 5'-phosphooligonucleotide end-products.. Functionally, serum endocuclease secreted into body fluids by a wide variety of exocrine and endocrine organs. Expressed by non-hematopoietic tissues and preferentially cleaves protein-free DNA. Among other functions, seems to be involved in cell death by apoptosis. Binds specifically to G-actin and blocks actin polymerization. This is Deoxyribonuclease-1 (DNASE1) from Gallus gallus (Chicken).